The following is a 416-amino-acid chain: Enolase (416 aa).

A (2R)-2-phosphoglycerate-binding site is contributed by Gln160. Glu204 functions as the Proton donor in the catalytic mechanism. 3 residues coordinate Mg(2+): Asp239, Glu282, and Asp308. Lys333, Arg362, Ser363, and Lys384 together coordinate (2R)-2-phosphoglycerate. Lys333 acts as the Proton acceptor in catalysis.

It belongs to the enolase family. Mg(2+) is required as a cofactor.

Its subcellular location is the cytoplasm. The protein resides in the secreted. It is found in the cell surface. It carries out the reaction (2R)-2-phosphoglycerate = phosphoenolpyruvate + H2O. It functions in the pathway carbohydrate degradation; glycolysis; pyruvate from D-glyceraldehyde 3-phosphate: step 4/5. Functionally, catalyzes the reversible conversion of 2-phosphoglycerate (2-PG) into phosphoenolpyruvate (PEP). It is essential for the degradation of carbohydrates via glycolysis. This chain is Enolase, found in Metallosphaera sedula (strain ATCC 51363 / DSM 5348 / JCM 9185 / NBRC 15509 / TH2).